We begin with the raw amino-acid sequence, 206 residues long: MASIYQKYSQLIAKRPLITNIITTGFLFGSGDYLAQTLYPSSSKYDYKRTLRATFYGSIIFAPIGDKWYRLLHKINFPFPKTKVSPTVSKVLNTLTKVGVDQLVFAPFIGIPLYYSVMSVLEFHDNPLQVAREKLHAHWFNTLKTNWVVWPTFQLFNFALIPVQFRLLVVNIFSIGWNCYLSSVLNHKHDFLIENITDVDKDEILI.

Helical transmembrane passes span Pro16–Gln36, Leu103–Phe123, and Leu155–Ile175.

It belongs to the peroxisomal membrane protein PXMP2/4 family.

The protein localises to the mitochondrion inner membrane. May be involved in cellular response to stress. Required to maintain mitochondrial DNA (mtDNA) integrity and stability. The protein is Protein SYM1 (SYM1) of Debaryomyces hansenii (strain ATCC 36239 / CBS 767 / BCRC 21394 / JCM 1990 / NBRC 0083 / IGC 2968) (Yeast).